The primary structure comprises 548 residues: T-complex protein 1 subunit theta (548 aa).

Residues 528 to 548 (ATGGPKPRGPKQQDEDDDGMA) form a disordered region.

This sequence belongs to the TCP-1 chaperonin family. As to quaternary structure, heterooligomeric complex.

It is found in the cytoplasm. Its function is as follows. Molecular chaperone; assists the folding of proteins upon ATP hydrolysis. Known to play a role, in vitro, in the folding of actin and tubulin. Required for correct subcellular localization of pgl-1. This is T-complex protein 1 subunit theta from Caenorhabditis briggsae.